The primary structure comprises 639 residues: AP2-like ethylene-responsive transcription factor CRL5 (639 aa).

2 disordered regions span residues 25 to 59 (PHMASSTMDEHHHVHHHQQQQQQQQQQQHHQQQQH) and 258 to 277 (GRKRGGAGGGGQKQPVHHRK). Over residues 43–59 (QQQQQQQQQQHHQQQQH) the composition is skewed to low complexity. DNA-binding regions (AP2/ERF) lie at residues 288 to 351 (QYRG…INFP) and 387 to 445 (MYRG…TNFD). A compositionally biased stretch (low complexity) spans 547-561 (QQQQQHMSMSAASSL). The segment at 547–579 (QQQQQHMSMSAASSLVTSLSNSREGSPDRGGGL) is disordered.

This sequence belongs to the AP2/ERF transcription factor family. AP2 subfamily. As to expression, highly expressed at the base of the stem. Expressed in stems. Expressed a low levels in crown roots and seeds. Expressed in the stem region where adventitious (crown) root initiation occurs.

Its subcellular location is the nucleus. Acts as a positive regulator of adventitious (crown) root formation by promoting its initiation. Promotes adventitious root initiation through repression of cytokinin signaling by positively regulating the two-component response regulator RR1. Regulated by the auxin response factor and transcriptional activator ARF23/ARF1. This Oryza sativa subsp. japonica (Rice) protein is AP2-like ethylene-responsive transcription factor CRL5.